We begin with the raw amino-acid sequence, 704 residues long: Elongation factor G (704 aa).

Residues 8-291 enclose the tr-type G domain; sequence DKVRNIGIMA…TVVECLPSPV (284 aa). GTP is bound by residues 17-24, 90-94, and 144-147; these read AHIDAGKT, DTPGH, and NKMD.

It belongs to the TRAFAC class translation factor GTPase superfamily. Classic translation factor GTPase family. EF-G/EF-2 subfamily.

The protein localises to the cytoplasm. Functionally, catalyzes the GTP-dependent ribosomal translocation step during translation elongation. During this step, the ribosome changes from the pre-translocational (PRE) to the post-translocational (POST) state as the newly formed A-site-bound peptidyl-tRNA and P-site-bound deacylated tRNA move to the P and E sites, respectively. Catalyzes the coordinated movement of the two tRNA molecules, the mRNA and conformational changes in the ribosome. The sequence is that of Elongation factor G from Prosthecochloris aestuarii (strain DSM 271 / SK 413).